Here is a 402-residue protein sequence, read N- to C-terminus: Exodeoxyribonuclease 7 large subunit (402 aa).

It belongs to the XseA family. As to quaternary structure, heterooligomer composed of large and small subunits.

Its subcellular location is the cytoplasm. The catalysed reaction is Exonucleolytic cleavage in either 5'- to 3'- or 3'- to 5'-direction to yield nucleoside 5'-phosphates.. In terms of biological role, bidirectionally degrades single-stranded DNA into large acid-insoluble oligonucleotides, which are then degraded further into small acid-soluble oligonucleotides. The chain is Exodeoxyribonuclease 7 large subunit from Moorella thermoacetica (strain ATCC 39073 / JCM 9320).